The following is a 632-amino-acid chain: Biosynthetic arginine decarboxylase (632 aa).

Lys-101 carries the N6-(pyridoxal phosphate)lysine modification. 281–291 contacts substrate; sequence FDVGGGLGVDY.

Belongs to the Orn/Lys/Arg decarboxylase class-II family. SpeA subfamily. It depends on Mg(2+) as a cofactor. Requires pyridoxal 5'-phosphate as cofactor.

It carries out the reaction L-arginine + H(+) = agmatine + CO2. It functions in the pathway amine and polyamine biosynthesis; agmatine biosynthesis; agmatine from L-arginine: step 1/1. Functionally, catalyzes the biosynthesis of agmatine from arginine. The chain is Biosynthetic arginine decarboxylase from Salmonella dublin (strain CT_02021853).